The following is a 161-amino-acid chain: Cyclic pyranopterin monophosphate synthase (161 aa).

Residues 75–77 (LCH) and 113–114 (ME) contribute to the substrate site. The active site involves D128.

This sequence belongs to the MoaC family. In terms of assembly, homohexamer; trimer of dimers.

The catalysed reaction is (8S)-3',8-cyclo-7,8-dihydroguanosine 5'-triphosphate = cyclic pyranopterin phosphate + diphosphate. The protein operates within cofactor biosynthesis; molybdopterin biosynthesis. Functionally, catalyzes the conversion of (8S)-3',8-cyclo-7,8-dihydroguanosine 5'-triphosphate to cyclic pyranopterin monophosphate (cPMP). This chain is Cyclic pyranopterin monophosphate synthase, found in Citrobacter koseri (strain ATCC BAA-895 / CDC 4225-83 / SGSC4696).